The chain runs to 46 residues: Photosystem II reaction center protein K (46 aa).

A propeptide spanning residues methionine 1–alanine 9 is cleaved from the precursor. The chain crosses the membrane as a helical span at residues phenylalanine 18–valine 38.

The protein belongs to the PsbK family. As to quaternary structure, PSII is composed of 1 copy each of membrane proteins PsbA, PsbB, PsbC, PsbD, PsbE, PsbF, PsbH, PsbI, PsbJ, PsbK, PsbL, PsbM, PsbT, PsbX, PsbY, PsbZ, Psb30/Ycf12, at least 3 peripheral proteins of the oxygen-evolving complex and a large number of cofactors. It forms dimeric complexes. This protein is tightly associated with CP43 (psbC), one of the core proteins.

The protein resides in the plastid. It is found in the chloroplast thylakoid membrane. One of the components of the core complex of photosystem II (PSII). PSII is a light-driven water:plastoquinone oxidoreductase that uses light energy to abstract electrons from H(2)O, generating O(2) and a proton gradient subsequently used for ATP formation. It consists of a core antenna complex that captures photons, and an electron transfer chain that converts photonic excitation into a charge separation. Required for assembly and/or stability of PSII. The protein is Photosystem II reaction center protein K of Chlamydomonas reinhardtii (Chlamydomonas smithii).